Consider the following 842-residue polypeptide: MutS protein homolog him-14 (842 aa).

Residues Met1–Glu21 are disordered. Gly588 to Ser595 provides a ligand contact to ATP.

Belongs to the DNA mismatch repair MutS family. Heterooligomer of him-14 and msh-5.

The protein localises to the nucleus. Required during the pachytene stage of meiotic prophase for the formation of crossovers between homologous chromosomes. Together with msh-5 and zhp-3 plays a role in the activation of DNA damage-dependent apoptosis at the DNA damage checkpoint in pachytene cells. Not needed for pairing or synapsis. May promote crossing over by interfering with Holliday junction branch migration. Has no apparent role in DNA mismatch repair. The sequence is that of MutS protein homolog him-14 from Caenorhabditis elegans.